Reading from the N-terminus, the 717-residue chain is Transport/processing ATP-binding protein ComA (717 aa).

A Peptidase C39 domain is found at 11 to 138 (QVDQMDCGVA…EEWTGVTLFM (128 aa)). C17 is an active-site residue. 6 consecutive transmembrane segments (helical) span residues 166 to 186 (GLIA…IVGS), 205 to 225 (LGII…LSYA), 237 to 257 (LSID…MSFF), 282 to 302 (TILS…VLFS), 306 to 326 (NLFF…FAFM), and 397 to 417 (VAHL…VMDG). The ABC transmembrane type-1 domain maps to 168-450 (IANIVLATLL…IINLQTKLQT (283 aa)). The ABC transporter domain occupies 484 to 717 (MTFKQVHYKY…GGFYAHLVNS (234 aa)). 517-524 (GISGSGKT) serves as a coordination point for ATP.

Belongs to the ABC transporter superfamily. Competence factor exporter (TC 3.A.1.112.1) family.

The protein localises to the cell membrane. Functionally, required for induction of competence. Seems to transport the competence-stimulating peptide (CSP). This Streptococcus pneumoniae serotype 4 (strain ATCC BAA-334 / TIGR4) protein is Transport/processing ATP-binding protein ComA (comA).